A 336-amino-acid polypeptide reads, in one-letter code: Homoserine O-acetyltransferase (336 aa).

Positions 58–321 constitute an AB hydrolase-1 domain; that stretch reads AILVLHALTG…PHGHDAFLID (264 aa). S147 functions as the Nucleophile in the catalytic mechanism. R204 contacts substrate. Active-site residues include D286 and H315. D316 is a binding site for substrate.

It belongs to the AB hydrolase superfamily. MetX family. In terms of assembly, homodimer.

It localises to the cytoplasm. The catalysed reaction is L-homoserine + acetyl-CoA = O-acetyl-L-homoserine + CoA. The protein operates within amino-acid biosynthesis; L-methionine biosynthesis via de novo pathway; O-acetyl-L-homoserine from L-homoserine: step 1/1. Transfers an acetyl group from acetyl-CoA to L-homoserine, forming acetyl-L-homoserine. In Deinococcus geothermalis (strain DSM 11300 / CIP 105573 / AG-3a), this protein is Homoserine O-acetyltransferase.